A 336-amino-acid chain; its full sequence is Anthranilate phosphoribosyltransferase (336 aa).

5-phospho-alpha-D-ribose 1-diphosphate-binding positions include Gly-82, 85 to 86, Thr-90, 92 to 95, 110 to 118, and Ser-122; these read GD, NIST, and KHGNRFASG. Gly-82 is a binding site for anthranilate. Ser-94 contributes to the Mg(2+) binding site. Asn-113 is a binding site for anthranilate. Arg-168 is a binding site for anthranilate. Mg(2+)-binding residues include Asp-227 and Glu-228.

The protein belongs to the anthranilate phosphoribosyltransferase family. As to quaternary structure, homodimer. The cofactor is Mg(2+).

It catalyses the reaction N-(5-phospho-beta-D-ribosyl)anthranilate + diphosphate = 5-phospho-alpha-D-ribose 1-diphosphate + anthranilate. The protein operates within amino-acid biosynthesis; L-tryptophan biosynthesis; L-tryptophan from chorismate: step 2/5. In terms of biological role, catalyzes the transfer of the phosphoribosyl group of 5-phosphorylribose-1-pyrophosphate (PRPP) to anthranilate to yield N-(5'-phosphoribosyl)-anthranilate (PRA). This Desulfitobacterium hafniense (strain DSM 10664 / DCB-2) protein is Anthranilate phosphoribosyltransferase.